Consider the following 134-residue polypeptide: Small ribosomal subunit protein bS6 (134 aa).

The protein belongs to the bacterial ribosomal protein bS6 family.

Functionally, binds together with bS18 to 16S ribosomal RNA. In Chlorobium phaeobacteroides (strain BS1), this protein is Small ribosomal subunit protein bS6.